A 191-amino-acid chain; its full sequence is Fe/S biogenesis protein NfuA (191 aa).

2 residues coordinate [4Fe-4S] cluster: Cys149 and Cys152.

The protein belongs to the NfuA family. In terms of assembly, homodimer. It depends on [4Fe-4S] cluster as a cofactor.

Involved in iron-sulfur cluster biogenesis. Binds a 4Fe-4S cluster, can transfer this cluster to apoproteins, and thereby intervenes in the maturation of Fe/S proteins. Could also act as a scaffold/chaperone for damaged Fe/S proteins. The chain is Fe/S biogenesis protein NfuA from Citrobacter koseri (strain ATCC BAA-895 / CDC 4225-83 / SGSC4696).